The following is a 212-amino-acid chain: Large ribosomal subunit protein uL3 (212 aa).

An N5-methylglutamine modification is found at Q153.

This sequence belongs to the universal ribosomal protein uL3 family. As to quaternary structure, part of the 50S ribosomal subunit. Forms a cluster with proteins L14 and L19. In terms of processing, methylated by PrmB.

Functionally, one of the primary rRNA binding proteins, it binds directly near the 3'-end of the 23S rRNA, where it nucleates assembly of the 50S subunit. This is Large ribosomal subunit protein uL3 from Colwellia psychrerythraea (strain 34H / ATCC BAA-681) (Vibrio psychroerythus).